We begin with the raw amino-acid sequence, 232 residues long: tRNA (guanine-N(1)-)-methyltransferase (232 aa).

Residues G111 and 131 to 136 (IGDYIL) contribute to the S-adenosyl-L-methionine site.

Belongs to the RNA methyltransferase TrmD family. Homodimer.

The protein resides in the cytoplasm. The catalysed reaction is guanosine(37) in tRNA + S-adenosyl-L-methionine = N(1)-methylguanosine(37) in tRNA + S-adenosyl-L-homocysteine + H(+). Functionally, specifically methylates guanosine-37 in various tRNAs. The chain is tRNA (guanine-N(1)-)-methyltransferase from Bartonella quintana (strain Toulouse) (Rochalimaea quintana).